The primary structure comprises 385 residues: Zinc finger protein B385R (385 aa).

2 C2H2-type zinc fingers span residues 166–190 (LQCP…FYNH) and 168–190 (CPNC…FYNH).

This sequence belongs to the asfivirus B385R family.

The sequence is that of Zinc finger protein B385R from African swine fever virus (isolate Tick/Malawi/Lil 20-1/1983) (ASFV).